A 459-amino-acid polypeptide reads, in one-letter code: Asparagine--tRNA ligase (459 aa).

Belongs to the class-II aminoacyl-tRNA synthetase family. As to quaternary structure, homodimer.

It localises to the cytoplasm. The catalysed reaction is tRNA(Asn) + L-asparagine + ATP = L-asparaginyl-tRNA(Asn) + AMP + diphosphate + H(+). The sequence is that of Asparagine--tRNA ligase from Pelobacter propionicus (strain DSM 2379 / NBRC 103807 / OttBd1).